The following is a 433-amino-acid chain: Zuotin (433 aa).

Position 50 is a phosphoserine (serine 50). A J domain is found at 98–170 (LYAAMGLSKL…RAQYDSCDFV (73 aa)). The span at 292 to 330 (EEKKEKERRKWEREAGARAEAEAKAKAEAEAKAKAESEA) shows a compositional bias: basic and acidic residues. A disordered region spans residues 292 to 357 (EEKKEKERRK…KAAKKKNKRA (66 aa)).

In terms of assembly, RAC is a heterodimer of the Hsp70/DnaK-type chaperone SSZ1 and the Hsp40/DnaJ-type chaperone ZUO1. RAC associates with ribosomes via ZUO1.

The protein localises to the cytoplasm. Its function is as follows. Component of the ribosome-associated complex (RAC), a heterodimeric chaperone complex involved in regulation of accurate translation termination and in folding or maintaining nascent polypeptides in a folding-competent state. RAC stimulates the ATPase activity of the ribosome-associated pool of Hsp70-type chaperones SSB1/SSB2 that bind to the nascent polypeptide chain. ZUO1 can act as a J-protein for SSB1/SSB2 only when associated with SSZ1. The protein is Zuotin (ZUO1) of Saccharomyces cerevisiae (strain ATCC 204508 / S288c) (Baker's yeast).